The primary structure comprises 233 residues: Orotidine 5'-phosphate decarboxylase (233 aa).

Residues D9, K31, 58-67 (DLKLHDIPNT), T120, R182, Q191, G211, and R212 contribute to the substrate site. The active-site Proton donor is the K60.

This sequence belongs to the OMP decarboxylase family. Type 1 subfamily. Homodimer.

It catalyses the reaction orotidine 5'-phosphate + H(+) = UMP + CO2. The protein operates within pyrimidine metabolism; UMP biosynthesis via de novo pathway; UMP from orotate: step 2/2. In terms of biological role, catalyzes the decarboxylation of orotidine 5'-monophosphate (OMP) to uridine 5'-monophosphate (UMP). In Listeria welshimeri serovar 6b (strain ATCC 35897 / DSM 20650 / CCUG 15529 / CIP 8149 / NCTC 11857 / SLCC 5334 / V8), this protein is Orotidine 5'-phosphate decarboxylase.